A 324-amino-acid polypeptide reads, in one-letter code: Succinylglutamate desuccinylase (324 aa).

Positions 53, 56, and 148 each coordinate Zn(2+). Glu211 is a catalytic residue.

This sequence belongs to the AspA/AstE family. Succinylglutamate desuccinylase subfamily. It depends on Zn(2+) as a cofactor.

The catalysed reaction is N-succinyl-L-glutamate + H2O = L-glutamate + succinate. It functions in the pathway amino-acid degradation; L-arginine degradation via AST pathway; L-glutamate and succinate from L-arginine: step 5/5. In terms of biological role, transforms N(2)-succinylglutamate into succinate and glutamate. This chain is Succinylglutamate desuccinylase, found in Acinetobacter baumannii (strain AB0057).